Here is a 174-residue protein sequence, read N- to C-terminus: ATP-dependent protease subunit HslV (174 aa).

The active site involves T2. Na(+)-binding residues include G157, C160, and T163.

It belongs to the peptidase T1B family. HslV subfamily. A double ring-shaped homohexamer of HslV is capped on each side by a ring-shaped HslU homohexamer. The assembly of the HslU/HslV complex is dependent on binding of ATP.

Its subcellular location is the cytoplasm. The enzyme catalyses ATP-dependent cleavage of peptide bonds with broad specificity.. Its activity is regulated as follows. Allosterically activated by HslU binding. In terms of biological role, protease subunit of a proteasome-like degradation complex believed to be a general protein degrading machinery. This Yersinia enterocolitica serotype O:8 / biotype 1B (strain NCTC 13174 / 8081) protein is ATP-dependent protease subunit HslV.